The primary structure comprises 310 residues: Olfactory receptor 5H14 (310 aa).

The Extracellular portion of the chain corresponds to 1–28 (MEEENATLLTEFVLTGFLYQPQWKIPLF). N-linked (GlcNAc...) asparagine glycosylation occurs at asparagine 5. Residues 29–49 (LAFLVIYLITIMGNLGLIAVI) traverse the membrane as a helical segment. Residues 50 to 56 (WKDPHLH) are Cytoplasmic-facing. A helical membrane pass occupies residues 57-77 (IPMYLLLGNLAFVDALLSSSV). Residues 78–98 (TLKMLINFLAKSKMISLSECK) lie on the Extracellular side of the membrane. Cysteine 97 and cysteine 179 form a disulfide bridge. The helical transmembrane segment at 99-119 (IQLFSFAISVTTECFLLATMA) threads the bilayer. The Cytoplasmic segment spans residues 120 to 143 (YDRYVAICKPLLYPAIMTNGLCIR). A helical membrane pass occupies residues 144–164 (LLILSYVGGLLHALIHEGFLF). The Extracellular portion of the chain corresponds to 165 to 195 (RLTFCNSNIIQHFYCDIIPLLKISYTDSSIN). Residues 196–216 (FLMVFIFAGSIQVFTIGTVLI) form a helical membrane-spanning segment. At 217–240 (SYIFVLYTILKKKSVKGMRKAFST) the chain is on the cytoplasmic side. Residues 241-261 (CGAHLLSVSLYYGPLAFMYMG) form a helical membrane-spanning segment. Residues 262–271 (SASPQADDQD) are Extracellular-facing. The helical transmembrane segment at 272–292 (MMESLFYTVIVPLLNPMIYSL) threads the bilayer. Over 293–310 (RNKQVIASFTKMFKRNDV) the chain is Cytoplasmic.

The protein belongs to the G-protein coupled receptor 1 family.

Its subcellular location is the cell membrane. Functionally, odorant receptor. In Homo sapiens (Human), this protein is Olfactory receptor 5H14 (OR5H14).